Reading from the N-terminus, the 384-residue chain is Ceramide synthase 6 (384 aa).

At 1-34 (MAGILAWFWNERFWLPHNVTWADLKNTEEATFPQ) the chain is on the lumenal side. Asn-18 carries N-linked (GlcNAc...) asparagine glycosylation. Residues 35-55 (AEDLYLAFPLAFCIFMVRLIF) traverse the membrane as a helical segment. A homeobox-like region spans residues 66–127 (ALNIQANGPQ…RQRRNQEKPS (62 aa)). One can recognise a TLC domain in the interval 130 to 331 (TRFCESMWRF…IVKIACKTVS (202 aa)). Transmembrane regions (helical) follow at residues 174 to 194 (LTADLHYYYILELSFYWSLMV), 205 to 225 (FGIMFLHHLATIFLITFSYVN), 263 to 283 (LFVMFAVVFITTRLGIFPLWV), and 303 to 323 (VFNLLLLLLQGLNCFWSYLIV). Residues 324–384 (KIACKTVSKG…LLTGPCSVDD (61 aa)) lie on the Cytoplasmic side of the membrane. The disordered stretch occupies residues 335–384 (VSKDDRSDIESSSDDEDSEPPGKKPHSSTTTNGTSGTNGYLLTGPCSVDD). Residues 361-373 (SSTTTNGTSGTNG) are compositionally biased toward low complexity.

N-glycosylated. Glycosylation on Asn-18 is not necessary for function. Post-translationally, acetylated. Deacetylation by SIRT3 increases enzyme activity and promotes mitochondrial ceramide accumulation. In terms of processing, phosphorylated at the C-terminus by CK2. Broadly expressed, with highest levels in kidney and brain (at protein level).

It is found in the endoplasmic reticulum membrane. The catalysed reaction is a sphingoid base + hexadecanoyl-CoA = an N-hexadecanoyl-sphingoid base + CoA + H(+). It catalyses the reaction sphinganine + hexadecanoyl-CoA = N-hexadecanoylsphinganine + CoA + H(+). The enzyme catalyses hexadecasphinganine + hexadecanoyl-CoA = N-hexadecanoylhexadecasphinganine + CoA + H(+). It carries out the reaction sphing-4-enine + hexadecanoyl-CoA = N-hexadecanoylsphing-4-enine + CoA + H(+). The catalysed reaction is sphinganine + tetradecanoyl-CoA = N-(tetradecanoyl)-sphinganine + CoA + H(+). It catalyses the reaction sphinganine + octadecanoyl-CoA = N-(octadecanoyl)-sphinganine + CoA + H(+). Its pathway is lipid metabolism; sphingolipid metabolism. Functionally, ceramide synthase that catalyzes the transfer of the acyl chain from acyl-CoA to a sphingoid base, with high selectivity toward palmitoyl-CoA (hexadecanoyl-CoA; C16:0-CoA). Can use other acyl donors, but with less efficiency. N-acylates sphinganine and sphingosine bases to form dihydroceramides and ceramides in de novo synthesis and salvage pathways, respectively. Ceramides generated by CERS6 play a role in inflammatory response. Acts as a regulator of metabolism and hepatic lipid accumulation. Under high fat diet, palmitoyl- (C16:0-) ceramides generated by CERS6 specifically bind the mitochondrial fission factor MFF, thereby promoting mitochondrial fragmentation and contributing to the development of obesity. The protein is Ceramide synthase 6 of Mus musculus (Mouse).